Here is a 307-residue protein sequence, read N- to C-terminus: Acetaldehyde dehydrogenase 1 (307 aa).

Catalysis depends on Cys-131, which acts as the Acyl-thioester intermediate. NAD(+)-binding positions include 162–170 (SIGPGTRKN) and Asn-273.

This sequence belongs to the acetaldehyde dehydrogenase family.

It catalyses the reaction acetaldehyde + NAD(+) + CoA = acetyl-CoA + NADH + H(+). The chain is Acetaldehyde dehydrogenase 1 (salG) from Metapseudomonas furukawaii (Pseudomonas furukawaii).